We begin with the raw amino-acid sequence, 311 residues long: Probable cell division protein WhiA (311 aa).

Positions 274 to 307 form a DNA-binding region, H-T-H motif; the sequence is SLKELGSLLTPPLTKSGVNHRFRKLELIAEKIRN.

The protein belongs to the WhiA family.

In terms of biological role, involved in cell division and chromosome segregation. The sequence is that of Probable cell division protein WhiA from Carboxydothermus hydrogenoformans (strain ATCC BAA-161 / DSM 6008 / Z-2901).